The primary structure comprises 647 residues: Solute carrier family 23 member 2 (647 aa).

Residues 1–11 (MMGVGKNTSKS) show a composition bias toward polar residues. The interval 1–26 (MMGVGKNTSKSVEVGGSTEGKYEEEA) is disordered. Topologically, residues 8–109 (TSKSVEVGGS…LCIFLGLQHY (102 aa)) are cytoplasmic. At Ser69 the chain carries Phosphoserine. Thr74 is subject to Phosphothreonine. Ser77 bears the Phosphoserine mark. The residue at position 78 (Thr78) is a Phosphothreonine. The residue at position 80 (Ser80) is a Phosphoserine. Residues 110 to 130 (LTCFSGTIAVPFLLADAMCVG) form a helical membrane-spanning segment. At 131–138 (DDQWATSQ) the chain is on the extracellular side. The chain crosses the membrane as a helical span at residues 139-159 (LIGTIFFCVGITTLLQTTFGC). Position 160 (Arg160) is a topological domain, cytoplasmic. The chain crosses the membrane as a helical span at residues 161–181 (LPLFQASAFAFLAPARAILSL). Topologically, residues 182–215 (DKWKCNTTEITVANGTAELLEHIWHPRIQEIQGA) are extracellular. Residues Asn187 and Asn195 are each glycosylated (N-linked (GlcNAc...) asparagine). The helical transmembrane segment at 216-236 (IIMSSLIEVVIGLLGLPGALL) threads the bilayer. Residues 237–263 (RYIGPLTITPTVALIGLSGFQAAGERA) are Cytoplasmic-facing. Residues 264–281 (GKHWGIAMLTIFLVLLFS) traverse the membrane as a helical segment. The Extracellular portion of the chain corresponds to 282 to 285 (QYAR). Residues 286-299 (NVKFPLPIYKSKKG) constitute an intramembrane region (helical). The Extracellular segment spans residues 300 to 306 (WTAYKLQ). Residues 307 to 327 (LFKMFPIILAILVSWLLCFIF) form a helical membrane-spanning segment. Over 328–368 (TVTDVFPSNSTDYGYYARTDARKGVLLVAPWFKVPYPFQWG) the chain is Cytoplasmic. A helical membrane pass occupies residues 369–389 (MPTVSAAGVIGMLSAVVASII). Residues 390-414 (ESIGDYYACARLSCAPPPPIHAINR) are Extracellular-facing. A helical membrane pass occupies residues 415 to 435 (GIFVEGLSCVLDGVFGTGNGS). At 436-458 (TSSSPNIGVLGITKVGSRRVIQY) the chain is on the cytoplasmic side. Residues 459 to 479 (GAALMLGLGMIGKFSALFASL) form a helical membrane-spanning segment. Residues 480-482 (PDP) are Extracellular-facing. Residues 483–503 (VLGALFCTLFGMITAVGLSNL) form a helical membrane-spanning segment. Residues 504 to 513 (QFIDLNSSRN) lie on the Cytoplasmic side of the membrane. A helical transmembrane segment spans residues 514–534 (LFVLGFSIFFGLVLPSYLRQN). Residues 535-544 (PLVTGITGID) lie on the Extracellular side of the membrane. A helical transmembrane segment spans residues 545 to 565 (QVLNVLLTTAMFVGGCVAFIL). Residues 566-647 (DNTIPGTPEE…SSDKDSQATV (82 aa)) are Cytoplasmic-facing. Thr646 is subject to Phosphothreonine.

The protein belongs to the nucleobase:cation symporter-2 (NCS2) (TC 2.A.40) family. In terms of assembly, interacts with CLSTN3. Phosphorylated. In terms of tissue distribution, highly expressed in neural, neuroendocrine, exocrine and endothelial tissues and in osteoblasts. Detected in neurons throughout the central nervous system, in meninges and choroid plexus, in the anterior pituitary, the intermediate lobe, in pancreas, adrenal cortex, gastric glands, and in the inner nuclear layer of the retina.

It localises to the cell membrane. It catalyses the reaction L-ascorbate(out) + 2 Na(+)(out) = L-ascorbate(in) + 2 Na(+)(in). Its function is as follows. Sodium/ascorbate cotransporter. Mediates electrogenic uptake of vitamin C, with a stoichiometry of 2 Na(+) for each ascorbate. This is Solute carrier family 23 member 2 (Slc23a2) from Rattus norvegicus (Rat).